The primary structure comprises 385 residues: Chaperone protein DnaJ (385 aa).

The 66-residue stretch at 5-70 folds into the J domain; it reads DYYEVLGVSK…ERKAAYDRYG (66 aa). The CR-type zinc finger occupies 143-221; it reads GLHKTINVPT…CNGHGRVEKD (79 aa). Zn(2+)-binding residues include Cys156, Cys159, Cys173, Cys176, Cys195, Cys198, Cys209, and Cys212. CXXCXGXG motif repeat units lie at residues 156–163, 173–180, 195–202, and 209–216; these read CTSCEGTG, CPTCSGMG, CPTCSGLG, and CKTCNGHG.

Belongs to the DnaJ family. In terms of assembly, homodimer. Zn(2+) serves as cofactor.

The protein resides in the cytoplasm. Functionally, participates actively in the response to hyperosmotic and heat shock by preventing the aggregation of stress-denatured proteins and by disaggregating proteins, also in an autonomous, DnaK-independent fashion. Unfolded proteins bind initially to DnaJ; upon interaction with the DnaJ-bound protein, DnaK hydrolyzes its bound ATP, resulting in the formation of a stable complex. GrpE releases ADP from DnaK; ATP binding to DnaK triggers the release of the substrate protein, thus completing the reaction cycle. Several rounds of ATP-dependent interactions between DnaJ, DnaK and GrpE are required for fully efficient folding. Also involved, together with DnaK and GrpE, in the DNA replication of plasmids through activation of initiation proteins. The chain is Chaperone protein DnaJ from Ruegeria sp. (strain TM1040) (Silicibacter sp.).